The primary structure comprises 134 residues: Fluoride-specific ion channel FluC (134 aa).

4 helical membrane-spanning segments follow: residues 7–27, 38–58, 69–89, and 110–130; these read LAVA…TIMA, GTLL…IVLV, LFLF…AAES, and VGSL…LLGH. Glycine 77 and threonine 80 together coordinate Na(+).

Belongs to the fluoride channel Fluc/FEX (TC 1.A.43) family.

The protein resides in the cell inner membrane. It catalyses the reaction fluoride(in) = fluoride(out). With respect to regulation, na(+) is not transported, but it plays an essential structural role and its presence is essential for fluoride channel function. Fluoride-specific ion channel. Important for reducing fluoride concentration in the cell, thus reducing its toxicity. The chain is Fluoride-specific ion channel FluC from Legionella pneumophila (strain Paris).